The sequence spans 399 residues: Acetate kinase (399 aa).

Asn7 contributes to the Mg(2+) binding site. Residue Lys14 coordinates ATP. Arg91 contacts substrate. The active-site Proton donor/acceptor is the Asp148. Residues 208-212 (HLGNG), 283-285 (DFR), and 331-335 (GLGEN) contribute to the ATP site. Glu384 is a Mg(2+) binding site.

Belongs to the acetokinase family. In terms of assembly, homodimer. The cofactor is Mg(2+). Mn(2+) serves as cofactor.

The protein localises to the cytoplasm. It catalyses the reaction acetate + ATP = acetyl phosphate + ADP. It functions in the pathway metabolic intermediate biosynthesis; acetyl-CoA biosynthesis; acetyl-CoA from acetate: step 1/2. In terms of biological role, catalyzes the formation of acetyl phosphate from acetate and ATP. Can also catalyze the reverse reaction. The protein is Acetate kinase of Desulfitobacterium hafniense (strain Y51).